Here is a 243-residue protein sequence, read N- to C-terminus: 3,4-dihydroxyphthalate decarboxylase (243 aa).

E86 serves as the catalytic Proton donor/acceptor. A divalent metal cation-binding residues include E86, H105, H107, and H173.

The protein belongs to the aldolase class II family. A divalent metal cation serves as cofactor.

The catalysed reaction is 3,4-dihydroxyphthalate + H(+) = 3,4-dihydroxybenzoate + CO2. It participates in xenobiotic degradation; phthalate degradation. Functionally, catalyzes the decarboxylation of 3,4-dihydroxyphthalate to protocatechuate (3,4-dihydroxybenzoate) during phthalate metabolism. The sequence is that of 3,4-dihydroxyphthalate decarboxylase from Rhodococcus jostii (strain RHA1).